The following is a 92-amino-acid chain: Elongation factor 1-beta (92 aa).

Belongs to the EF-1-beta/EF-1-delta family.

Functionally, promotes the exchange of GDP for GTP in EF-1-alpha/GDP, thus allowing the regeneration of EF-1-alpha/GTP that could then be used to form the ternary complex EF-1-alpha/GTP/AAtRNA. The protein is Elongation factor 1-beta of Hyperthermus butylicus (strain DSM 5456 / JCM 9403 / PLM1-5).